The primary structure comprises 305 residues: Homoserine O-acetyltransferase (305 aa).

Cysteine 132 serves as the catalytic Acyl-thioester intermediate. Positions 153 and 181 each coordinate substrate. The active-site Proton acceptor is the histidine 221. Glutamate 223 is an active-site residue. Arginine 235 is a substrate binding site.

It belongs to the MetA family.

It is found in the cytoplasm. It carries out the reaction L-homoserine + acetyl-CoA = O-acetyl-L-homoserine + CoA. It participates in amino-acid biosynthesis; L-methionine biosynthesis via de novo pathway; O-acetyl-L-homoserine from L-homoserine: step 1/1. Its function is as follows. Transfers an acetyl group from acetyl-CoA to L-homoserine, forming acetyl-L-homoserine. The polypeptide is Homoserine O-acetyltransferase (Leuconostoc mesenteroides subsp. mesenteroides (strain ATCC 8293 / DSM 20343 / BCRC 11652 / CCM 1803 / JCM 6124 / NCDO 523 / NBRC 100496 / NCIMB 8023 / NCTC 12954 / NRRL B-1118 / 37Y)).